Reading from the N-terminus, the 428-residue chain is Enolase (428 aa).

Gln162 is a binding site for (2R)-2-phosphoglycerate. Glu204 acts as the Proton donor in catalysis. 3 residues coordinate Mg(2+): Asp241, Glu283, and Asp310. The (2R)-2-phosphoglycerate site is built by Lys335, Arg364, Ser365, and Lys386. Lys335 functions as the Proton acceptor in the catalytic mechanism.

Belongs to the enolase family. Mg(2+) is required as a cofactor.

It is found in the cytoplasm. Its subcellular location is the secreted. The protein resides in the cell surface. It carries out the reaction (2R)-2-phosphoglycerate = phosphoenolpyruvate + H2O. The protein operates within carbohydrate degradation; glycolysis; pyruvate from D-glyceraldehyde 3-phosphate: step 4/5. Its function is as follows. Catalyzes the reversible conversion of 2-phosphoglycerate (2-PG) into phosphoenolpyruvate (PEP). It is essential for the degradation of carbohydrates via glycolysis. The protein is Enolase of Nocardia farcinica (strain IFM 10152).